Here is a 431-residue protein sequence, read N- to C-terminus: Mothers against decapentaplegic homolog 6 (431 aa).

The segment covering M1–R15 has biased composition (basic residues). A disordered region spans residues M1 to A95. Residues G29–A38 show a composition bias toward polar residues. Residues P71–P90 are compositionally biased toward pro residues. The MH1 domain maps to A85–P209. Positions 139, 182, 194, and 199 each coordinate Zn(2+). The span at T235 to V245 shows a compositional bias: polar residues. The disordered stretch occupies residues T235–D258. The MH2 domain maps to W265–R431.

It belongs to the dwarfin/SMAD family. As to expression, developing heart, eyes and limbs.

The protein localises to the nucleus. Transforming growth factor-beta superfamily receptors signaling occurs through the Smad family of intracellular mediators. SMAD6 is an inhibitory Smad (i-Smad) that negatively regulates signaling downstream of type I transforming growth factor-beta. Acts as a mediator of TGF-beta and BMP anti-inflammatory activities. Suppresses IL1R-TLR signaling through its direct interaction with PEL1, preventing NF-kappa-B activation, nuclear transport and NF-kappa-B-mediated expression of pro-inflammatory genes. Blocks the BMP-SMAD1 signaling pathway by competing with SMAD4 for receptor-activated SMAD1-binding. Binds to regulatory elements in target promoter regions. This Gallus gallus (Chicken) protein is Mothers against decapentaplegic homolog 6 (SMAD6).